A 441-amino-acid chain; its full sequence is Myocyte-specific enhancer factor 2C (441 aa).

The region spanning methionine 1 to aspartate 61 is the MADS-box domain. An N6-acetyllysine modification is found at lysine 4. The segment at residues alanine 58–glutamate 86 is a DNA-binding region (mef2-type). At serine 59 the chain carries Phosphoserine; by CK2. A disordered region spans residues lysine 91–lysine 116. A phosphoserine mark is found at serine 98, serine 106, and serine 110. N6-acetyllysine is present on residues lysine 116 and lysine 119. Positions asparagine 180–glycine 224 are disordered. Phosphoserine is present on residues serine 222 and serine 228. N6-acetyllysine is present on residues lysine 234 and lysine 239. Serine 240 carries the phosphoserine modification. N6-acetyllysine occurs at positions 252 and 264. Residues serine 271–leucine 278 form a beta domain region. A phosphothreonine; by MAPK7 and MAPK14 mark is found at threonine 293 and threonine 300. The segment at glutamine 353–threonine 441 is disordered. Over residues alanine 362–proline 377 the composition is skewed to polar residues. A Phosphoserine; by MAPK7 modification is found at serine 387. Over residues serine 387–aspartate 400 the composition is skewed to low complexity. Residues glycine 401–phenylalanine 411 are compositionally biased toward basic and acidic residues. Phosphoserine is present on serine 413.

It belongs to the MEF2 family. As to quaternary structure, forms a complex with class II HDACs in undifferentiating cells. On myogenic differentiation, HDACs are released into the cytoplasm allowing MEF2s to interact with other proteins for activation. Interacts with EP300 in differentiating cells; the interaction acetylates MEF2C leading to increased DNA binding and activation. Interacts with HDAC7 and CARM1. Interacts with HDAC4, HDAC7 and HDAC9; the interaction with HDACs represses transcriptional activity. Interacts with LPIN1. Interacts with MYOCD. Interacts with AKAP13. Interacts with FOXK1; the interaction inhibits MEF2C transactivation activity. Interacts (via N-terminus) with HABP4; this interaction decreases DNA-binding activity of MEF2C in myocardial cells in response to mechanical stress. Interacts with JPH2; interaction specifically takes place with the Junctophilin-2 N-terminal fragment cleavage product of JPH2. Interacts (via MADS box) with SOX18. Interacts with PHF7; the interaction promotes MEF2C binding to its transcription targets. Post-translationally, phosphorylation on Ser-59 enhances DNA binding activity. In terms of processing, acetylated by p300 on several sites in diffentiating myocytes. Acetylation on Lys-4 increases DNA binding and transactivation. Proteolytically cleaved in cerebellar granule neurons, probably by caspase 7, following neurotoxicity.

The protein localises to the nucleus. Its subcellular location is the cytoplasm. It localises to the sarcoplasm. In terms of biological role, transcription activator which binds specifically to the MEF2 element present in the regulatory regions of many muscle-specific genes. Controls cardiac morphogenesis and myogenesis, and is also involved in vascular development. Enhances transcriptional activation mediated by SOX18. Plays an essential role in hippocampal-dependent learning and memory by suppressing the number of excitatory synapses and thus regulating basal and evoked synaptic transmission. Crucial for normal neuronal development, distribution, and electrical activity in the neocortex. Necessary for proper development of megakaryocytes and platelets and for bone marrow B-lymphopoiesis. Required for B-cell survival and proliferation in response to BCR stimulation, efficient IgG1 antibody responses to T-cell-dependent antigens and for normal induction of germinal center B-cells. May also be involved in neurogenesis and in the development of cortical architecture. The protein is Myocyte-specific enhancer factor 2C of Bos taurus (Bovine).